The primary structure comprises 342 residues: Signal-regulatory protein beta-2 (342 aa).

The first 32 residues, 1–32 (MCSTMSAPTCLAHLPPCFLLLALVLVPSDASG), serve as a signal peptide directing secretion. Ig-like V-type domains follow at residues 33 to 143 (QSSR…KSDE) and 157 to 258 (PDLW…SGQG). Topologically, residues 33–287 (QSSRNDWQVL…EPATEMSPTG (255 aa)) are extracellular. Residues C60 and C127 are joined by a disulfide bond. N116, N179, and N231 each carry an N-linked (GlcNAc...) asparagine glycan. An intrachain disulfide couples C180 to C242. A helical membrane pass occupies residues 288–308 (LLVVFAPVVLGLKAITLAALL). Over 309–342 (LALATSRRSPGQEDVKTTGPAGAMNTLAWSKGQE) the chain is Cytoplasmic. The tract at residues 317–342 (SPGQEDVKTTGPAGAMNTLAWSKGQE) is disordered.

The protein resides in the membrane. This chain is Signal-regulatory protein beta-2 (SIRPB2), found in Homo sapiens (Human).